A 446-amino-acid polypeptide reads, in one-letter code: Exodeoxyribonuclease 7 large subunit (446 aa).

This sequence belongs to the XseA family. In terms of assembly, heterooligomer composed of large and small subunits.

It localises to the cytoplasm. The catalysed reaction is Exonucleolytic cleavage in either 5'- to 3'- or 3'- to 5'-direction to yield nucleoside 5'-phosphates.. Bidirectionally degrades single-stranded DNA into large acid-insoluble oligonucleotides, which are then degraded further into small acid-soluble oligonucleotides. This chain is Exodeoxyribonuclease 7 large subunit, found in Streptococcus pyogenes serotype M49 (strain NZ131).